We begin with the raw amino-acid sequence, 384 residues long: N-acetyldiaminopimelate deacetylase (384 aa).

Residue D74 is part of the active site. The active-site Proton acceptor is E133.

This sequence belongs to the peptidase M20A family. N-acetyldiaminopimelate deacetylase subfamily.

The enzyme catalyses N-acetyl-(2S,6S)-2,6-diaminopimelate + H2O = (2S,6S)-2,6-diaminopimelate + acetate. It participates in amino-acid biosynthesis; L-lysine biosynthesis via DAP pathway; LL-2,6-diaminopimelate from (S)-tetrahydrodipicolinate (acetylase route): step 3/3. In terms of biological role, catalyzes the conversion of N-acetyl-diaminopimelate to diaminopimelate and acetate. The protein is N-acetyldiaminopimelate deacetylase of Lactiplantibacillus plantarum (strain ATCC BAA-793 / NCIMB 8826 / WCFS1) (Lactobacillus plantarum).